The sequence spans 454 residues: Ornithine aminotransferase (454 aa).

Residues Gly-124, Thr-125, and Gln-267 each coordinate pyridoxal 5'-phosphate. Lys-293 bears the N6-(pyridoxal phosphate)lysine mark. Thr-321 is a binding site for pyridoxal 5'-phosphate.

It belongs to the class-III pyridoxal-phosphate-dependent aminotransferase family. As to quaternary structure, homotetramer; dimer of dimers. It depends on pyridoxal 5'-phosphate as a cofactor.

The enzyme catalyses L-ornithine + 2-oxoglutarate = L-glutamate 5-semialdehyde + L-glutamate. It catalyses the reaction L-lysine + 2-oxoglutarate = (S)-2-amino-6-oxohexanoate + L-glutamate. Functionally, catalyzes the conversion of L-ornithine and 2-oxoglutarate to L-glutamate semialdehyde and L-glutamate. L-ornithine is the best substrate, but the enzyme also shows good activity toward L-lysine, and low activity toward D-ornithine, D-lysine, 5-aminovalerate, 6-aminohexanoate and GABA. The enzyme activity is specific for 2-oxoglutarate. The polypeptide is Ornithine aminotransferase (Pyrococcus horikoshii (strain ATCC 700860 / DSM 12428 / JCM 9974 / NBRC 100139 / OT-3)).